The chain runs to 911 residues: Chromatin assembly factor 1 subunit A (911 aa).

The binds PCNA stretch occupies residues M1 to A31. The tract at residues H166–T200 is disordered. Residues D176–E327 are binds CBX1 and CBX3 chromo shadow domains. Residues G186 to T200 are compositionally biased toward polar residues. Phosphoserine is present on residues S190 and S208. The short motif at F217–L230 is the PxVxL motif element. Disordered stretches follow at residues S250–K408 and D578–G618. Low complexity predominate over residues L265–G281. S293 is subject to Phosphoserine. Positions S310 to K408 are enriched in basic and acidic residues. 2 stretches are compositionally biased toward acidic residues: residues D578–G589 and G597–G612. The tract at residues S621–F657 is necessary for homodimerization and competence for chromatin assembly. The segment at H639–K911 is binds to p60. At S776 the chain carries Phosphoserine. Disordered stretches follow at residues P819–K843 and G866–D886. The segment covering G827–P839 has biased composition (polar residues). A Phosphothreonine modification is found at T838. A compositionally biased stretch (acidic residues) spans D876–D886.

Belongs to the CHAF1A family. Homodimer. Part of the CAF-1 complex that contains RBBP4, CHAF1B and CHAF1A. CHAF1A binds directly to CHAF1B. Only minor amounts of RBBP4 are complexed with CHAF1A and CHAF1B in G1 phase. Interacts with PCNA; the interaction is direct. Interacts (via the PxVxL motif) with CBX5; the interaction is direct. Interacts with MBD1. Interacts with histones H3.1, H3.2 and H3.1t.

It is found in the nucleus. In terms of biological role, acts as a component of the histone chaperone complex chromatin assembly factor 1 (CAF-1), which assembles histone octamers onto DNA during replication and repair. CAF-1 performs the first step of the nucleosome assembly process, bringing newly synthesized histones H3 and H4 to replicating DNA; histones H2A/H2B can bind to this chromatin precursor subsequent to DNA replication to complete the histone octamer. It may play a role in heterochromatin maintenance in proliferating cells by bringing newly synthesized cbx proteins to heterochromatic DNA replication foci. This is Chromatin assembly factor 1 subunit A from Mus musculus (Mouse).